We begin with the raw amino-acid sequence, 403 residues long: Phosphopentomutase (403 aa).

Residues D13, D298, H303, D339, H340, and H351 each contribute to the Mn(2+) site.

It belongs to the phosphopentomutase family. Mn(2+) is required as a cofactor.

It localises to the cytoplasm. The enzyme catalyses 2-deoxy-alpha-D-ribose 1-phosphate = 2-deoxy-D-ribose 5-phosphate. It carries out the reaction alpha-D-ribose 1-phosphate = D-ribose 5-phosphate. Its pathway is carbohydrate degradation; 2-deoxy-D-ribose 1-phosphate degradation; D-glyceraldehyde 3-phosphate and acetaldehyde from 2-deoxy-alpha-D-ribose 1-phosphate: step 1/2. In terms of biological role, isomerase that catalyzes the conversion of deoxy-ribose 1-phosphate (dRib-1-P) and ribose 1-phosphate (Rib-1-P) to deoxy-ribose 5-phosphate (dRib-5-P) and ribose 5-phosphate (Rib-5-P), respectively. This is Phosphopentomutase from Streptococcus pyogenes serotype M12 (strain MGAS2096).